Here is a 182-residue protein sequence, read N- to C-terminus: ATP-dependent protease subunit HslV (182 aa).

Thr-12 is an active-site residue. Ala-167, Cys-170, and Thr-173 together coordinate Na(+).

It belongs to the peptidase T1B family. HslV subfamily. In terms of assembly, a double ring-shaped homohexamer of HslV is capped on each side by a ring-shaped HslU homohexamer. The assembly of the HslU/HslV complex is dependent on binding of ATP.

The protein localises to the cytoplasm. The enzyme catalyses ATP-dependent cleavage of peptide bonds with broad specificity.. With respect to regulation, allosterically activated by HslU binding. Its function is as follows. Protease subunit of a proteasome-like degradation complex believed to be a general protein degrading machinery. The polypeptide is ATP-dependent protease subunit HslV (Chlorobium luteolum (strain DSM 273 / BCRC 81028 / 2530) (Pelodictyon luteolum)).